The sequence spans 271 residues: Interleukin-1 alpha (271 aa).

The propeptide occupies 1–112 (MAKVPDMFED…DSEEEIIKPR (112 aa)). Residue Lys82 is modified to N6-acetyllysine. A nuclear localization signal (NLS) region spans residues 82-86 (KKRRL). The residue at position 87 (Ser87) is a Phosphoserine. Residues Asn102 and Asn141 are each glycosylated (N-linked (GlcNAc...) asparagine).

This sequence belongs to the IL-1 family. As to quaternary structure, monomer. Interacts with TMED10; the interaction mediates the translocation from the cytoplasm into the ERGIC (endoplasmic reticulum-Golgi intermediate compartment) and thereby secretion. Interacts with IL1R1. Interacts with S100A13; this interaction is the first step in the export of IL1A, followed by direct translocation of this complex across the plasma membrane. Post-translationally, acetylated within its nuclear localization sequence, which impacts subcellular localization. Proteolytic processed by CAPN1 in a calcium-dependent manner. Cleavage from 31 kDa precursor to 18 kDa biologically active molecules. In terms of processing, phosphorylated. Phosphorylation greatly enhances susceptibility to digestion and promotes the conversion of pre-IL1A alpha to the biologically active IL1A.

It localises to the nucleus. The protein localises to the cytoplasm. Its subcellular location is the secreted. Cytokine constitutively present intracellularly in nearly all resting non-hematopoietic cells that plays an important role in inflammation and bridges the innate and adaptive immune systems. After binding to its receptor IL1R1 together with its accessory protein IL1RAP, forms the high affinity interleukin-1 receptor complex. Signaling involves the recruitment of adapter molecules such as MYD88, IRAK1 or IRAK4. In turn, mediates the activation of NF-kappa-B and the three MAPK pathways p38, p42/p44 and JNK pathways. Within the cell, acts as an alarmin and cell death results in its liberation in the extracellular space after disruption of the cell membrane to induce inflammation and alert the host to injury or damage. In addition to its role as a danger signal, which occurs when the cytokine is passively released by cell necrosis, directly senses DNA damage and acts as signal for genotoxic stress without loss of cell integrity. The polypeptide is Interleukin-1 alpha (IL1A) (Cercocebus atys (Sooty mangabey)).